The primary structure comprises 677 residues: UvrABC system protein B (677 aa).

Residues 25 to 412 enclose the Helicase ATP-binding domain; sequence QGVNGGERYQ…GGEVAQQVIR (388 aa). 38 to 45 is a binding site for ATP; that stretch reads GATGTGKT. Positions 91–114 match the Beta-hairpin motif; sequence YYDYYQPEAYVPVSDTYIAKTASI. The region spanning 429–591 is the Helicase C-terminal domain; sequence QVDDLLGEIR…IVPTAAGKKA (163 aa). The 36-residue stretch at 639–674 folds into the UVR domain; sequence PELIDQLEGKMKEAAKKLDFEDAANLRDRIKQLRQK.

It belongs to the UvrB family. Forms a heterotetramer with UvrA during the search for lesions. Interacts with UvrC in an incision complex.

It localises to the cytoplasm. In terms of biological role, the UvrABC repair system catalyzes the recognition and processing of DNA lesions. A damage recognition complex composed of 2 UvrA and 2 UvrB subunits scans DNA for abnormalities. Upon binding of the UvrA(2)B(2) complex to a putative damaged site, the DNA wraps around one UvrB monomer. DNA wrap is dependent on ATP binding by UvrB and probably causes local melting of the DNA helix, facilitating insertion of UvrB beta-hairpin between the DNA strands. Then UvrB probes one DNA strand for the presence of a lesion. If a lesion is found the UvrA subunits dissociate and the UvrB-DNA preincision complex is formed. This complex is subsequently bound by UvrC and the second UvrB is released. If no lesion is found, the DNA wraps around the other UvrB subunit that will check the other stand for damage. The polypeptide is UvrABC system protein B (Parasynechococcus marenigrum (strain WH8102)).